Here is a 264-residue protein sequence, read N- to C-terminus: tRNA-uridine aminocarboxypropyltransferase A (264 aa).

Residues C25, C28, C35, and C37 each coordinate Zn(2+). The short motif at 144 to 147 (DATW) is the DXTW element. The segment at 245 to 264 (RPKLLKKRFQNQQPLEQEEE) is disordered. A compositionally biased stretch (polar residues) spans 254–264 (QNQQPLEQEEE).

The protein belongs to the TDD superfamily. DTWD2 family.

The enzyme catalyses a uridine in tRNA + S-adenosyl-L-methionine = a 3-[(3S)-3-amino-3-carboxypropyl]uridine in tRNA + S-methyl-5'-thioadenosine + H(+). Catalyzes the formation of 3-(3-amino-3-carboxypropyl)uridine (acp3U) at position 20a in the D-loop of several cytoplasmic tRNAs (acp3U(20a)). This Arabidopsis thaliana (Mouse-ear cress) protein is tRNA-uridine aminocarboxypropyltransferase A.